The sequence spans 677 residues: Sulfate transporter 2.2 (677 aa).

The Cytoplasmic portion of the chain corresponds to M1–D110. The chain crosses the membrane as a helical span at residues L111–L131. Residues A132–G133 lie on the Extracellular side of the membrane. A helical membrane pass occupies residues L134–G154. The Cytoplasmic segment spans residues T155–E158. A helical transmembrane segment spans residues L159–Q179. The Extracellular portion of the chain corresponds to D180–K190. A helical membrane pass occupies residues I191 to L211. The Cytoplasmic portion of the chain corresponds to G212–F213. A helical transmembrane segment spans residues L214 to I234. The Extracellular portion of the chain corresponds to G235–Q270. The N-linked (GlcNAc...) asparagine glycan is linked to N250. Residues P271 to G291 form a helical membrane-spanning segment. Residues K292–K296 are Cytoplasmic-facing. A helical membrane pass occupies residues L297–Y317. The Extracellular portion of the chain corresponds to L318–G352. Residues Q353–G373 traverse the membrane as a helical segment. Residues R374–E389 are Cytoplasmic-facing. A helical membrane pass occupies residues M390–G410. Residues S411–G422 are Extracellular-facing. N418 carries N-linked (GlcNAc...) asparagine glycosylation. The chain crosses the membrane as a helical span at residues C423–L443. The Cytoplasmic portion of the chain corresponds to T444–F446. Residues L447–I467 form a helical membrane-spanning segment. At D468 to D482 the chain is on the extracellular side. The helical transmembrane segment at F483–L503 threads the bilayer. The Cytoplasmic portion of the chain corresponds to L504–C677. The 127-residue stretch at Y540–Y666 folds into the STAS domain.

It belongs to the SLC26A/SulP transporter (TC 2.A.53) family. Expressed in the phloem in roots and in the phloem of vascular bundles in leaves.

It is found in the membrane. Functionally, low-affinity H(+)/sulfate cotransporter that may be involved in the distribution of sulfate from vascular bundles to the palisade cells of the leaves. Plays a central role in the regulation of sulfate assimilation. This is Sulfate transporter 2.2 (SULTR2;2) from Arabidopsis thaliana (Mouse-ear cress).